Consider the following 495-residue polypeptide: UDP-glycosyltransferase 73C13 (495 aa).

Histidine 24 functions as the Proton acceptor in the catalytic mechanism. Histidine 24 lines the an anthocyanidin pocket. Aspartate 129 functions as the Charge relay in the catalytic mechanism. Residues alanine 356, glutamine 358, histidine 373, tryptophan 376, asparagine 377, serine 378, and glutamate 381 each contribute to the UDP-alpha-D-glucose site. Alanine 396 serves as a coordination point for an anthocyanidin. The UDP-alpha-D-glucose site is built by aspartate 397 and glutamine 398.

Belongs to the UDP-glycosyltransferase family.

It carries out the reaction oleanolate + UDP-alpha-D-glucose = oleanolate 3-O-beta-D-glucoside + UDP + H(+). Functionally, catalyzes the transfer of a glucose (Glc) moiety from UDP-Glc to the C-3 position of the oleanane sapogenins oleanolate and hederagenin, and to the C-28 carboxylic group of the lupane sapogenin betulinate. The monoglucosylated hederagenin 3-O-beta-D-glucoside is a feeding deterrent of the yellow-striped flea beetle (Phyllotreta nemorum). This chain is UDP-glycosyltransferase 73C13, found in Barbarea vulgaris (Yellow rocket).